The primary structure comprises 435 residues: UDP-N-acetylmuramate--L-alanine ligase (435 aa).

An ATP-binding site is contributed by 108–114 (GSHGKTS).

This sequence belongs to the MurCDEF family.

The protein localises to the cytoplasm. It catalyses the reaction UDP-N-acetyl-alpha-D-muramate + L-alanine + ATP = UDP-N-acetyl-alpha-D-muramoyl-L-alanine + ADP + phosphate + H(+). Its pathway is cell wall biogenesis; peptidoglycan biosynthesis. In terms of biological role, cell wall formation. The sequence is that of UDP-N-acetylmuramate--L-alanine ligase from Shouchella clausii (strain KSM-K16) (Alkalihalobacillus clausii).